Reading from the N-terminus, the 220-residue chain is Redox-sensing transcriptional repressor Rex (220 aa).

A DNA-binding region (H-T-H motif) is located at residues 16–55 (MYVQVLETLKREGSQVVSSELLARTCSVNPSQIRKDLAYF). Residue 90-95 (GIGNLG) participates in NAD(+) binding.

Belongs to the transcriptional regulatory Rex family. In terms of assembly, homodimer.

Its subcellular location is the cytoplasm. In terms of biological role, modulates transcription in response to changes in cellular NADH/NAD(+) redox state. This chain is Redox-sensing transcriptional repressor Rex, found in Solidesulfovibrio magneticus (strain ATCC 700980 / DSM 13731 / RS-1) (Desulfovibrio magneticus).